The chain runs to 282 residues: Ribosomal RNA small subunit methyltransferase I (282 aa).

The protein belongs to the methyltransferase superfamily. RsmI family.

It is found in the cytoplasm. It carries out the reaction cytidine(1402) in 16S rRNA + S-adenosyl-L-methionine = 2'-O-methylcytidine(1402) in 16S rRNA + S-adenosyl-L-homocysteine + H(+). Catalyzes the 2'-O-methylation of the ribose of cytidine 1402 (C1402) in 16S rRNA. The sequence is that of Ribosomal RNA small subunit methyltransferase I from Pseudomonas aeruginosa (strain ATCC 15692 / DSM 22644 / CIP 104116 / JCM 14847 / LMG 12228 / 1C / PRS 101 / PAO1).